A 129-amino-acid polypeptide reads, in one-letter code: uncharacterized protein (129 aa).

Residues 33-50 (MGGNVMWFIALLFALLIA) traverse the membrane as a helical segment.

It localises to the membrane. This is an uncharacterized protein from Saccharomyces cerevisiae (strain ATCC 204508 / S288c) (Baker's yeast).